The sequence spans 91 residues: UPF0250 protein PputW619_0619 (91 aa).

It belongs to the UPF0250 family.

The polypeptide is UPF0250 protein PputW619_0619 (Pseudomonas putida (strain W619)).